Here is a 259-residue protein sequence, read N- to C-terminus: Undecaprenyl-diphosphatase 3 (259 aa).

A run of 8 helical transmembrane segments spans residues 1–21, 39–59, 71–91, 99–119, 133–153, 174–194, 208–228, and 239–259; these read MNWL…FLPI, AGLF…FIYY, FSKL…IGLL, ISKT…FLYM, ITYK…FPAI, AYFS…LQFV, SLIV…SWMI, and FAYY…TDVF.

This sequence belongs to the UppP family.

The protein resides in the cell membrane. It carries out the reaction di-trans,octa-cis-undecaprenyl diphosphate + H2O = di-trans,octa-cis-undecaprenyl phosphate + phosphate + H(+). Functionally, catalyzes the dephosphorylation of undecaprenyl diphosphate (UPP). Confers resistance to bacitracin. In Bacillus cereus (strain ATCC 14579 / DSM 31 / CCUG 7414 / JCM 2152 / NBRC 15305 / NCIMB 9373 / NCTC 2599 / NRRL B-3711), this protein is Undecaprenyl-diphosphatase 3.